We begin with the raw amino-acid sequence, 454 residues long: C4-dicarboxylate transport protein (454 aa).

The next 9 helical transmembrane spans lie at Val-33–Gly-53, Leu-66–Met-86, Ile-101–Val-121, Glu-148–Ala-168, Gly-170–Gly-190, Leu-210–Ile-230, Met-243–Val-263, Leu-354–Ile-374, and Ala-377–Ile-397.

This sequence belongs to the dicarboxylate/amino acid:cation symporter (DAACS) (TC 2.A.23) family.

The protein resides in the cell inner membrane. Functionally, responsible for the transport of dicarboxylates such as succinate, fumarate, and malate from the periplasm across the membrane. The sequence is that of C4-dicarboxylate transport protein from Sinorhizobium medicae (strain WSM419) (Ensifer medicae).